A 343-amino-acid chain; its full sequence is Probable 3',5'-cyclic-nucleotide phosphodiesterase (343 aa).

An N-terminal signal peptide occupies residues 1–36 (MKYLSIKSASDKIKSGLLKTGVILSFSLFSSLSTAA).

Belongs to the cyclic nucleotide phosphodiesterase class-II family.

The protein localises to the periplasm. The catalysed reaction is a nucleoside 3',5'-cyclic phosphate + H2O = a nucleoside 5'-phosphate + H(+). This Yersinia pestis protein is Probable 3',5'-cyclic-nucleotide phosphodiesterase (cpdP).